The chain runs to 532 residues: Invertase 2 (532 aa).

The first 19 residues, Met1 to Ala19, serve as a signal peptide directing secretion. N-linked (GlcNAc...) asparagine glycosylation is present at Asn23. Substrate is bound by residues Trp39–Asp42 and Gln60. Asp42 is a catalytic residue. Asn64 carries an N-linked (GlcNAc...) asparagine; partial glycan. Asn97 carries N-linked (GlcNAc...) asparagine glycosylation. Residue Phe102–Ser103 coordinates substrate. Asn111 and Asn118 each carry an N-linked (GlcNAc...) asparagine glycan. Asn165 carries an N-linked (GlcNAc...) asparagine; partial glycan. Residues Arg170 to Asp171 and Glu223 each bind substrate. 2 N-linked (GlcNAc...) asparagine; partial glycosylation sites follow: Asn266 and Asn275. A substrate-binding site is contributed by Trp311. N-linked (GlcNAc...) asparagine glycans are attached at residues Asn356, Asn369, Asn384, and Asn398. Asn512 carries an N-linked (GlcNAc...) asparagine; partial glycan.

It belongs to the glycosyl hydrolase 32 family. Post-translationally, isoform Secreted is glycosylated. Isoform Intracellular is not glycosylated.

It is found in the cytoplasm. The protein localises to the secreted. The enzyme catalyses Hydrolysis of terminal non-reducing beta-D-fructofuranoside residues in beta-D-fructofuranosides.. This Saccharomyces cerevisiae (strain ATCC 204508 / S288c) (Baker's yeast) protein is Invertase 2 (SUC2).